Here is a 463-residue protein sequence, read N- to C-terminus: Glutamate--tRNA ligase 2 (463 aa).

A 'HIGH' region motif is present at residues 11–21 (PSPTGYLHIGG). The 'KMSKS' region motif lies at 240–244 (KLSKR). Residue K243 coordinates ATP.

Belongs to the class-I aminoacyl-tRNA synthetase family. Glutamate--tRNA ligase type 1 subfamily. Monomer.

The protein localises to the cytoplasm. The catalysed reaction is tRNA(Glu) + L-glutamate + ATP = L-glutamyl-tRNA(Glu) + AMP + diphosphate. Its function is as follows. Catalyzes the attachment of glutamate to tRNA(Glu) in a two-step reaction: glutamate is first activated by ATP to form Glu-AMP and then transferred to the acceptor end of tRNA(Glu). The polypeptide is Glutamate--tRNA ligase 2 (Campylobacter jejuni (strain RM1221)).